The following is a 180-amino-acid chain: Outer-membrane lipoprotein LolB (180 aa).

A signal peptide spans 1 to 16 (MIRRVLLLSLALLLAG). C17 is lipidated: N-palmitoyl cysteine. C17 carries S-diacylglycerol cysteine lipidation.

This sequence belongs to the LolB family. As to quaternary structure, monomer.

Its subcellular location is the cell outer membrane. In terms of biological role, plays a critical role in the incorporation of lipoproteins in the outer membrane after they are released by the LolA protein. This is Outer-membrane lipoprotein LolB from Chromobacterium violaceum (strain ATCC 12472 / DSM 30191 / JCM 1249 / CCUG 213 / NBRC 12614 / NCIMB 9131 / NCTC 9757 / MK).